The primary structure comprises 361 residues: MLYWLTQLLQGQYHAFRVFQYLTFRSILASLTALIVGLLCGPLMIRWLRGLQIGQMVRSDGPQTHLSKAGTPTMGGVLILLAITVSCLLWCDLRQTSLWLVLLVTLANGLVGWVDDYRKLVLKNSKGLPGRWKYFWQSVIALVAVSYLYWNASLPVHTQLTVPFFKTVTWDLGVFFPVLAYFVIVGSSNAVNLTDGLDGLAIMPIVMVAGALGVFAYASSNAVYSNYLGIPYVPNTGELTIFCSSIVGAGLGFLWYNSYPAQVFMGDVGSLALGAALGIVAIVVRQELVLLIMGGLFVIETLSVILQVGYFKYSGGKRLFRMAPLHHHFELKGWSEPKVIVRFWIITVVFVLCGLATLKLR.

10 consecutive transmembrane segments (helical) span residues 27-47, 70-90, 97-117, 134-154, 167-187, 199-219, 236-256, 263-283, 288-308, and 338-358; these read ILAS…MIRW, GTPT…CLLW, SLWL…VDDY, YFWQ…NASL, TVTW…IVGS, GLAI…AYAS, TGEL…FLWY, VFMG…VAIV, LVLL…ILQV, and KVIV…LATL.

Belongs to the glycosyltransferase 4 family. MraY subfamily. Mg(2+) serves as cofactor.

It localises to the cell inner membrane. It catalyses the reaction UDP-N-acetyl-alpha-D-muramoyl-L-alanyl-gamma-D-glutamyl-meso-2,6-diaminopimeloyl-D-alanyl-D-alanine + di-trans,octa-cis-undecaprenyl phosphate = di-trans,octa-cis-undecaprenyl diphospho-N-acetyl-alpha-D-muramoyl-L-alanyl-D-glutamyl-meso-2,6-diaminopimeloyl-D-alanyl-D-alanine + UMP. It functions in the pathway cell wall biogenesis; peptidoglycan biosynthesis. Its function is as follows. Catalyzes the initial step of the lipid cycle reactions in the biosynthesis of the cell wall peptidoglycan: transfers peptidoglycan precursor phospho-MurNAc-pentapeptide from UDP-MurNAc-pentapeptide onto the lipid carrier undecaprenyl phosphate, yielding undecaprenyl-pyrophosphoryl-MurNAc-pentapeptide, known as lipid I. The polypeptide is Phospho-N-acetylmuramoyl-pentapeptide-transferase (Legionella pneumophila (strain Paris)).